Consider the following 89-residue polypeptide: Large ribosomal subunit protein bL28 (89 aa).

The protein belongs to the bacterial ribosomal protein bL28 family.

This Chlamydia abortus (strain DSM 27085 / S26/3) (Chlamydophila abortus) protein is Large ribosomal subunit protein bL28.